The following is a 466-amino-acid chain: Probable aminotransferase Rv3329 (466 aa).

At Lys294 the chain carries N6-(pyridoxal phosphate)lysine.

Belongs to the class-III pyridoxal-phosphate-dependent aminotransferase family. It depends on pyridoxal 5'-phosphate as a cofactor.

In terms of biological role, probable aminotransferase. The sequence is that of Probable aminotransferase Rv3329 from Mycobacterium tuberculosis (strain ATCC 25618 / H37Rv).